The primary structure comprises 93 residues: Small ribosomal subunit protein uS19 (93 aa).

The protein belongs to the universal ribosomal protein uS19 family.

In terms of biological role, protein S19 forms a complex with S13 that binds strongly to the 16S ribosomal RNA. This chain is Small ribosomal subunit protein uS19, found in Helicobacter acinonychis (strain Sheeba).